The following is a 322-amino-acid chain: Cytochrome c biogenesis protein CcsA (322 aa).

Helical transmembrane passes span I9–L29, G44–G64, L71–F91, F97–L117, M143–I163, I225–N245, W254–I274, and A286–L306.

It belongs to the CcmF/CycK/Ccl1/NrfE/CcsA family. As to quaternary structure, may interact with Ccs1.

It is found in the plastid. Its subcellular location is the chloroplast thylakoid membrane. Its function is as follows. Required during biogenesis of c-type cytochromes (cytochrome c6 and cytochrome f) at the step of heme attachment. This Manihot esculenta (Cassava) protein is Cytochrome c biogenesis protein CcsA.